Reading from the N-terminus, the 277-residue chain is Phosphatidylglycerol--prolipoprotein diacylglyceryl transferase (277 aa).

3 consecutive transmembrane segments (helical) span residues 17–37 (LAIH…MLLG), 63–83 (ILFL…CLFY), and 101–121 (GGMA…WFAH). Residue arginine 146 participates in a 1,2-diacyl-sn-glycero-3-phospho-(1'-sn-glycerol) binding. 3 helical membrane passes run 182–202 (SQVY…WLYA), 209–229 (GQVA…AEQF), and 234–254 (AFLG…LPMI).

It belongs to the Lgt family.

It localises to the cell inner membrane. It catalyses the reaction L-cysteinyl-[prolipoprotein] + a 1,2-diacyl-sn-glycero-3-phospho-(1'-sn-glycerol) = an S-1,2-diacyl-sn-glyceryl-L-cysteinyl-[prolipoprotein] + sn-glycerol 1-phosphate + H(+). Its pathway is protein modification; lipoprotein biosynthesis (diacylglyceryl transfer). Catalyzes the transfer of the diacylglyceryl group from phosphatidylglycerol to the sulfhydryl group of the N-terminal cysteine of a prolipoprotein, the first step in the formation of mature lipoproteins. The chain is Phosphatidylglycerol--prolipoprotein diacylglyceryl transferase from Verminephrobacter eiseniae (strain EF01-2).